The following is a 910-amino-acid chain: MAEGVVLFGVHKLWELLNRESARLNGIGEQVDGLKRQLGRLQSLLKDADAKKHESERVRNFLEDVRDIVYDAEDIIESFLLNEFRTKEKGIKKHARRLACFLVDRRKFASDIKGITKKISEVIGGMKSLGIQEIIDGASSMSLQERQREQKEIRQTFANSSESDLVGVEQSVEALAGHLVENDNIQVVSISGMGGIGKTTLARQVFHHDMVQRHFDGFAWVFVSQQFTQKHVWQRIWQELQPQNGDISHMDEHILQGKLFKLLETGRYLVVLDDVWKEEDWDRIKAVFPRKRGWKMLLTSRNEGVGIHADPKSFGFKTRILTPEESWKLCEKIVFHRRDETGTLSEVRVDEDMEAMGKEMVTCCGGLPLAVKVLGGLLATKHTVPEWKRVYDNIGPHLAGRSSLDDNLNSIYRVLSLSYEDLPMCLKHCFLYLAHFPEYYEIHVKRLFNYLAAEGIITSSDDGTTIQDKGEDYLEELARRNMITIDKNYMFLRKKHCQMHDMMREVCLSKAKEENFLEIFKVSTATSAINARSLSKSRRLSVHGGNALQSLGQTINKKVRSLLYFAFEDEFCILESTTPCFRSLPLLRVLDLSRVKFEGGKLPSSIGDLIHLRFLSLHRAWISHLPSSLRNLKLLLYLNLGFNGMVHVPNVLKEMQELRYLQLPMSMHDKTKLELSDLVNLESLMNFSTKYASVMDLLHMTKLRELSLFITDGSSDTLSSSLGQLRSLEVLHLYDRQEPRVAYHGGEIVLNCIHLKELELAIHMPRFPDQYLFHPHLSHIYLWCCSMEEDPIPILERLLHLKSVILTFGAFVGRRMVCSKGGFPQLCFLKLEELEELEEWIVEEGSMPLLRALTICNCRKLKLPGGINYITSLKELTIVGMKWKEKLVPGGEDYYKVQNIPNVQFINCDE.

Residues 22-60 (ARLNGIGEQVDGLKRQLGRLQSLLKDADAKKHESERVRN) adopt a coiled-coil conformation. The 293-residue stretch at 169–461 (EQSVEALAGH…AAEGIITSSD (293 aa)) folds into the NB-ARC domain. LRR repeat units follow at residues 584 to 609 (LPLLRVLDLSRVKFEGGKLPSSIGDL), 610 to 632 (IHLRFLSLHRAWISHLPSSLRNL), 634 to 655 (LLLYLNLGFNGMVHVPNVLKEM), 700 to 725 (MTKLRELSLFITDGSSDTLSSSLGQL), 726 to 751 (RSLEVLHLYDRQEPRVAYHGGEIVLN), and 847 to 871 (MPLLRALTICNCRKLKLPGGINYIT).

This sequence belongs to the disease resistance NB-LRR family. RPP8/HRT subfamily.

In terms of biological role, confers susceptibility to the fungus Cochliobolus victoriae by conditioning victorin-dependent (victorin is a toxin synthesized by C.victoriae) induction of defense-associated proteins. This Arabidopsis thaliana (Mouse-ear cress) protein is Disease susceptibility protein LOV1 (LOV1).